A 1486-amino-acid polypeptide reads, in one-letter code: Chromosome partition protein MukB (1486 aa).

Position 34–41 (glycine 34–serine 41) interacts with ATP. 3 coiled-coil regions span residues leucine 326–glutamine 418, leucine 444–glutamine 480, and arginine 509–valine 603. The flexible hinge stretch occupies residues proline 666–arginine 783. Coiled-coil stretches lie at residues glutamate 835–glutamate 923, glutamate 977–alanine 1115, and valine 1209–serine 1266.

The protein belongs to the SMC family. MukB subfamily. Homodimerization via its hinge domain. Binds to DNA via its C-terminal region. Interacts, and probably forms a ternary complex, with MukE and MukF via its C-terminal region. The complex formation is stimulated by calcium or magnesium. Interacts with tubulin-related protein FtsZ.

It localises to the cytoplasm. The protein localises to the nucleoid. Plays a central role in chromosome condensation, segregation and cell cycle progression. Functions as a homodimer, which is essential for chromosome partition. Involved in negative DNA supercoiling in vivo, and by this means organize and compact chromosomes. May achieve or facilitate chromosome segregation by condensation DNA from both sides of a centrally located replisome during cell division. This chain is Chromosome partition protein MukB, found in Escherichia coli O6:K15:H31 (strain 536 / UPEC).